The sequence spans 166 residues: Large ribosomal subunit protein uL10 (166 aa).

This sequence belongs to the universal ribosomal protein uL10 family. In terms of assembly, part of the ribosomal stalk of the 50S ribosomal subunit. The N-terminus interacts with L11 and the large rRNA to form the base of the stalk. The C-terminus forms an elongated spine to which L12 dimers bind in a sequential fashion forming a multimeric L10(L12)X complex.

In terms of biological role, forms part of the ribosomal stalk, playing a central role in the interaction of the ribosome with GTP-bound translation factors. This chain is Large ribosomal subunit protein uL10, found in Pseudomonas fluorescens (strain SBW25).